A 483-amino-acid polypeptide reads, in one-letter code: Glutamate--tRNA ligase (483 aa).

Positions 11-21 match the 'HIGH' region motif; sequence PSPTGHLHIGN. Positions 252 to 256 match the 'KMSKS' region motif; the sequence is KLSKR. Lys-255 contacts ATP.

This sequence belongs to the class-I aminoacyl-tRNA synthetase family. Glutamate--tRNA ligase type 1 subfamily. As to quaternary structure, monomer.

It is found in the cytoplasm. The enzyme catalyses tRNA(Glu) + L-glutamate + ATP = L-glutamyl-tRNA(Glu) + AMP + diphosphate. Its function is as follows. Catalyzes the attachment of glutamate to tRNA(Glu) in a two-step reaction: glutamate is first activated by ATP to form Glu-AMP and then transferred to the acceptor end of tRNA(Glu). The protein is Glutamate--tRNA ligase of Bacillus velezensis (strain DSM 23117 / BGSC 10A6 / LMG 26770 / FZB42) (Bacillus amyloliquefaciens subsp. plantarum).